Here is a 347-residue protein sequence, read N- to C-terminus: S-adenosylmethionine:tRNA ribosyltransferase-isomerase (347 aa).

Belongs to the QueA family. Monomer.

It is found in the cytoplasm. The enzyme catalyses 7-aminomethyl-7-carbaguanosine(34) in tRNA + S-adenosyl-L-methionine = epoxyqueuosine(34) in tRNA + adenine + L-methionine + 2 H(+). The protein operates within tRNA modification; tRNA-queuosine biosynthesis. Its function is as follows. Transfers and isomerizes the ribose moiety from AdoMet to the 7-aminomethyl group of 7-deazaguanine (preQ1-tRNA) to give epoxyqueuosine (oQ-tRNA). This is S-adenosylmethionine:tRNA ribosyltransferase-isomerase from Methylococcus capsulatus (strain ATCC 33009 / NCIMB 11132 / Bath).